We begin with the raw amino-acid sequence, 567 residues long: Proline--tRNA ligase (567 aa).

It belongs to the class-II aminoacyl-tRNA synthetase family. ProS type 1 subfamily. In terms of assembly, homodimer.

The protein localises to the cytoplasm. It catalyses the reaction tRNA(Pro) + L-proline + ATP = L-prolyl-tRNA(Pro) + AMP + diphosphate. Catalyzes the attachment of proline to tRNA(Pro) in a two-step reaction: proline is first activated by ATP to form Pro-AMP and then transferred to the acceptor end of tRNA(Pro). As ProRS can inadvertently accommodate and process non-cognate amino acids such as alanine and cysteine, to avoid such errors it has two additional distinct editing activities against alanine. One activity is designated as 'pretransfer' editing and involves the tRNA(Pro)-independent hydrolysis of activated Ala-AMP. The other activity is designated 'posttransfer' editing and involves deacylation of mischarged Ala-tRNA(Pro). The misacylated Cys-tRNA(Pro) is not edited by ProRS. This is Proline--tRNA ligase from Geobacillus thermodenitrificans (strain NG80-2).